Consider the following 304-residue polypeptide: Acetaldehyde dehydrogenase 4 (304 aa).

Catalysis depends on C131, which acts as the Acyl-thioester intermediate. Residues 162–170 and N273 each bind NAD(+); that span reads SAGPGTRKN.

The protein belongs to the acetaldehyde dehydrogenase family.

The catalysed reaction is acetaldehyde + NAD(+) + CoA = acetyl-CoA + NADH + H(+). In Dechloromonas aromatica (strain RCB), this protein is Acetaldehyde dehydrogenase 4.